Consider the following 336-residue polypeptide: UDP-3-O-acylglucosamine N-acyltransferase (336 aa).

The Proton acceptor role is filled by His233.

The protein belongs to the transferase hexapeptide repeat family. LpxD subfamily. As to quaternary structure, homotrimer.

The catalysed reaction is a UDP-3-O-[(3R)-3-hydroxyacyl]-alpha-D-glucosamine + a (3R)-hydroxyacyl-[ACP] = a UDP-2-N,3-O-bis[(3R)-3-hydroxyacyl]-alpha-D-glucosamine + holo-[ACP] + H(+). It functions in the pathway bacterial outer membrane biogenesis; LPS lipid A biosynthesis. Functionally, catalyzes the N-acylation of UDP-3-O-acylglucosamine using 3-hydroxyacyl-ACP as the acyl donor. Is involved in the biosynthesis of lipid A, a phosphorylated glycolipid that anchors the lipopolysaccharide to the outer membrane of the cell. This is UDP-3-O-acylglucosamine N-acyltransferase from Helicobacter pylori (strain ATCC 700392 / 26695) (Campylobacter pylori).